A 321-amino-acid polypeptide reads, in one-letter code: Dolichyl N-acetyl-alpha-D-glucosaminyl phosphate 3-beta-D-2,3-diacetamido-2,3-dideoxy-beta-D-glucuronosyltransferase (321 aa).

Transmembrane regions (helical) follow at residues 252 to 272 and 290 to 310; these read FGFL…FIYI and LYIA…YGFF.

Belongs to the glycosyltransferase 2 family.

The protein resides in the cell membrane. The catalysed reaction is an archaeal dolichyl N-acetyl-alpha-D-glucosaminyl phosphate + UDP-2,3-diacetamido-2,3-dideoxy-alpha-D-glucuronate = an archaeal dolichyl 3-O-(2,3-diacetamido-2,3-dideoxy- beta-D-glucuronosyl)-N-acetyl- alpha-D-glucosaminyl phosphate + UDP + H(+). Its pathway is cell surface structure biogenesis; S-layer biogenesis. It participates in protein modification; protein glycosylation. Involved in the assembly of an N-linked disaccharide that decorates the S-layer glycoprotein and flagellins. AglC catalyzes the transfer of 2,3-diacetamido-2,3-dideoxy-alpha-D-glucuronic acid (Glc-2,3-diNAcA) from uridine 5'-diphospho 2,3-diacetamido-2,3-dideoxy-alpha-D-glucuronic acid (UDP-Glc-2,3-diNAcA) to the AglK product Dol-P-GlcNAc to yield Dol-P-GlcNAc-Glc-2,3-diNAcA. AglC is specific for the monophosphate-linked Dol-P-GlcNAc. This Methanococcus voltae protein is Dolichyl N-acetyl-alpha-D-glucosaminyl phosphate 3-beta-D-2,3-diacetamido-2,3-dideoxy-beta-D-glucuronosyltransferase.